The primary structure comprises 79 residues: Sec-independent protein translocase protein TatA (79 aa).

Residues Met1–Phe21 form a helical membrane-spanning segment. Composition is skewed to basic and acidic residues over residues Met44–Asp58 and Gln66–Ala79. Residues Met44 to Ala79 form a disordered region.

It belongs to the TatA/E family. The Tat system comprises two distinct complexes: a TatABC complex, containing multiple copies of TatA, TatB and TatC subunits, and a separate TatA complex, containing only TatA subunits. Substrates initially bind to the TatABC complex, which probably triggers association of the separate TatA complex to form the active translocon.

The protein localises to the cell inner membrane. Part of the twin-arginine translocation (Tat) system that transports large folded proteins containing a characteristic twin-arginine motif in their signal peptide across membranes. TatA could form the protein-conducting channel of the Tat system. The polypeptide is Sec-independent protein translocase protein TatA (Alcanivorax borkumensis (strain ATCC 700651 / DSM 11573 / NCIMB 13689 / SK2)).